Consider the following 308-residue polypeptide: Tyrosine recombinase XerC (308 aa).

Positions 20 to 101 (SKLHTLIDDF…SVKAFSSWAQ (82 aa)) constitute a Core-binding (CB) domain. The Tyr recombinase domain maps to 122 to 302 (DLPKILGEQQ…SNKRLLEAFN (181 aa)). Active-site residues include Arg-163, Lys-187, His-254, Arg-257, and His-280. Residue Tyr-289 is the O-(3'-phospho-DNA)-tyrosine intermediate of the active site.

This sequence belongs to the 'phage' integrase family. XerC subfamily. Forms a cyclic heterotetrameric complex composed of two molecules of XerC and two molecules of XerD.

It localises to the cytoplasm. Functionally, site-specific tyrosine recombinase, which acts by catalyzing the cutting and rejoining of the recombining DNA molecules. The XerC-XerD complex is essential to convert dimers of the bacterial chromosome into monomers to permit their segregation at cell division. It also contributes to the segregational stability of plasmids. The chain is Tyrosine recombinase XerC from Corynebacterium glutamicum (strain ATCC 13032 / DSM 20300 / JCM 1318 / BCRC 11384 / CCUG 27702 / LMG 3730 / NBRC 12168 / NCIMB 10025 / NRRL B-2784 / 534).